The chain runs to 412 residues: Transcription factor NIGT1 (412 aa).

3 disordered regions span residues 54–241, 286–310, and 358–412; these read MDAA…RCWA, KYRL…PAPP, and AMLP…TTSA. The span at 90-112 shows a compositional bias: basic and acidic residues; it reads ESTHADAAKSGKKEEAETSERHS. Low complexity predominate over residues 183 to 193; sequence ASSTTAAASST. Over residues 198–228 the composition is skewed to basic and acidic residues; it reads SGDKPTDDDTEKHMETDKDNDKDAKDKDKEG. In terms of domain architecture, HTH myb-type spans 232-292; sequence PHRKPRRCWA…HLQKYRLHTR (61 aa). The H-T-H motif DNA-binding region spans 263–288; sequence PKQIRELMKVDGLTNDEVKSHLQKYR. Residues 383–392 are compositionally biased toward basic and acidic residues; sequence SGSEGRRSGD. The span at 395 to 412 shows a compositional bias: low complexity; it reads DGSSSSPAVSSSSQTTSA.

The protein localises to the nucleus. In terms of biological role, transcriptional repressor that may play a role in response to nitrogen. May be involved in a time-dependent signaling for transcriptional regulation of nitrate-responsive genes. Binds specifically to the DNA sequence motif 5'-GAATC-3' or 5'-GAATATTC-3'. Represses the activity of its own promoter trough binding to these motifs. This Oryza sativa subsp. japonica (Rice) protein is Transcription factor NIGT1.